Here is a 568-residue protein sequence, read N- to C-terminus: Keratin, type I cytoskeletal 10 (568 aa).

Positions 1–15 (MSVRYSSSKQYSSSR) are enriched in low complexity. A disordered region spans residues 1 to 31 (MSVRYSSSKQYSSSRSGGGGGGGGGSSFRIS). A head region spans residues 1–135 (MSVRYSSSKQ…GGDGGLLSGN (135 aa)). Phosphoserine occurs at positions 14, 16, 36, 47, 50, and 160. The span at 16-26 (SGGGGGGGGGS) shows a compositional bias: gly residues. Residues 136–171 (EKVTMQNLNDRLASYLDKVRALEESNYELEGKIKEW) form a coil 1A region. The region spanning 136–450 (EKVTMQNLND…SLLEGEGSSG (315 aa)) is the IF rod domain. Residues 172–192 (YEKHGNSSQRAPRDYSKYYQT) are linker 1. The tract at residues 193–284 (IEDLKNQILN…KNHEEEMRDL (92 aa)) is coil 1B. The tract at residues 285–307 (QNVSTGDVNVEMNAAPGVDLTEL) is linker 12. Positions 308–446 (LNNMRNQYEQ…QTYRSLLEGE (139 aa)) are coil 2. Residues 447–568 (GSSGGGGYGG…GESSSKGPRY (122 aa)) are tail. Over residues 485-546 (GGGSSGGGGH…GGGYGGGSSS (62 aa)) the composition is skewed to gly residues. Positions 485–568 (GGGSSGGGGH…GESSSKGPRY (84 aa)) are disordered. Positions 547–568 (SGGHKSSSSGSVGESSSKGPRY) are enriched in low complexity.

Belongs to the intermediate filament family. As to quaternary structure, heterotetramer of two type I and two type II keratins. Heterodimer with KRT1. Two heterodimers of KRT1 and KRT10 form a heterotetramer. The KRT10 subunit in the heterotetramer is probably disulfide-linked. As to expression, expressed in skin.

The protein localises to the secreted. It localises to the extracellular space. The protein resides in the cell surface. It is found in the cytoplasm. Its function is as follows. Plays a role in the establishment of the epidermal barrier on plantar skin. Involved in the maintenance of cell layer development and keratin filament bundles in suprabasal cells of the epithelium. This Canis lupus familiaris (Dog) protein is Keratin, type I cytoskeletal 10.